The primary structure comprises 160 residues: MIKKRKKKSYTEVYALGQYISMSAHKARRVIDQIRGRSYEEALMILELMPYRGCYPIFKLVYSAAANASHNKGFKETNLVISKAEVNQGNTVKKLKPRARGRSYPIKRSTCHITIVLEDISFYQQNEEYLMYLKKPGCSNENRNLTCYDTYSSGGLWDKK.

Belongs to the universal ribosomal protein uL22 family. In terms of assembly, part of the 50S ribosomal subunit.

It localises to the plastid. The protein resides in the chloroplast. In terms of biological role, this protein binds specifically to 23S rRNA. The globular domain of the protein is located near the polypeptide exit tunnel on the outside of the subunit, while an extended beta-hairpin is found that lines the wall of the exit tunnel in the center of the 70S ribosome. The sequence is that of Large ribosomal subunit protein uL22c (rpl22) from Capsella bursa-pastoris (Shepherd's purse).